The following is a 282-amino-acid chain: Glutamate--LysW ligase ArgX (282 aa).

ATP is bound by residues Lys87, Lys127, 131–137 (GSWGRLV), and 167–178 (QEYINYKSRDIR). The ATP-grasp domain maps to 91–277 (YSKLYREGIP…VAEELVSYVK (187 aa)). A substrate-binding site is contributed by Arg192. Residue Asn202 participates in ATP binding. 203–204 (IA) is a binding site for substrate. 3 residues coordinate Mg(2+): Asp237, Glu250, and Asn252. A substrate-binding site is contributed by 256-260 (EFKGF). Residues 259-260 (GF) carry the GF motif that is essential for ArgX substrate specificity motif.

The protein belongs to the RimK family. LysX subfamily. As to quaternary structure, homotetramer. Interacts with LysW. Mg(2+) serves as cofactor.

It catalyses the reaction [amino-group carrier protein]-C-terminal-L-glutamate + L-glutamate + ATP = [amino-group carrier protein]-C-terminal-gamma-(L-glutamyl)-L-glutamate + ADP + phosphate + H(+). The protein operates within amino-acid biosynthesis; L-arginine biosynthesis. Functionally, catalyzes the ATP-dependent formation of a covalent bond between the amino group of glutamate and the gamma-carboxyl group of the C-terminal glutamate residue in LysW. This chain is Glutamate--LysW ligase ArgX, found in Sulfolobus acidocaldarius (strain ATCC 33909 / DSM 639 / JCM 8929 / NBRC 15157 / NCIMB 11770).